A 315-amino-acid polypeptide reads, in one-letter code: Probable cytochrome c oxidase subunit 2 (315 aa).

Helical transmembrane passes span Ile54–Trp74, Leu96–Ile116, and Val133–Pro153. Residues His235, Cys270, Cys274, and His278 each coordinate Cu cation.

It belongs to the cytochrome c oxidase subunit 2 family. Cu cation is required as a cofactor. Requires heme as cofactor.

Its subcellular location is the cell membrane. The enzyme catalyses 4 Fe(II)-[cytochrome c] + O2 + 8 H(+)(in) = 4 Fe(III)-[cytochrome c] + 2 H2O + 4 H(+)(out). Subunits I and II form the functional core of the enzyme complex. Electrons originating in cytochrome c are transferred via heme a and Cu(A) to the binuclear center formed by heme a3 and Cu(B). The protein is Probable cytochrome c oxidase subunit 2 (ctaC) of Rickettsia conorii (strain ATCC VR-613 / Malish 7).